An 88-amino-acid chain; its full sequence is Elongation factor 1-beta (88 aa).

It belongs to the EF-1-beta/EF-1-delta family.

Promotes the exchange of GDP for GTP in EF-1-alpha/GDP, thus allowing the regeneration of EF-1-alpha/GTP that could then be used to form the ternary complex EF-1-alpha/GTP/AAtRNA. In Halobacterium salinarum (strain ATCC 29341 / DSM 671 / R1), this protein is Elongation factor 1-beta.